The chain runs to 242 residues: Ubiquinone biosynthesis O-methyltransferase (242 aa).

Residues Arg-44, Gly-64, Asp-85, and Met-129 each contribute to the S-adenosyl-L-methionine site.

This sequence belongs to the methyltransferase superfamily. UbiG/COQ3 family.

It catalyses the reaction a 3-demethylubiquinol + S-adenosyl-L-methionine = a ubiquinol + S-adenosyl-L-homocysteine + H(+). The catalysed reaction is a 3-(all-trans-polyprenyl)benzene-1,2-diol + S-adenosyl-L-methionine = a 2-methoxy-6-(all-trans-polyprenyl)phenol + S-adenosyl-L-homocysteine + H(+). Its pathway is cofactor biosynthesis; ubiquinone biosynthesis. Functionally, O-methyltransferase that catalyzes the 2 O-methylation steps in the ubiquinone biosynthetic pathway. This chain is Ubiquinone biosynthesis O-methyltransferase, found in Salmonella arizonae (strain ATCC BAA-731 / CDC346-86 / RSK2980).